Reading from the N-terminus, the 553-residue chain is Arginine--tRNA ligase (553 aa).

Residues 122 to 132 carry the 'HIGH' region motif; that stretch reads ANPTGFLHVGH.

Belongs to the class-I aminoacyl-tRNA synthetase family. As to quaternary structure, monomer.

It localises to the cytoplasm. It carries out the reaction tRNA(Arg) + L-arginine + ATP = L-arginyl-tRNA(Arg) + AMP + diphosphate. The protein is Arginine--tRNA ligase of Mesoplasma florum (strain ATCC 33453 / NBRC 100688 / NCTC 11704 / L1) (Acholeplasma florum).